A 231-amino-acid polypeptide reads, in one-letter code: NADH-ubiquinone oxidoreductase chain 4 (231 aa).

6 helical membrane-spanning segments follow: residues 1–21 (PIAG…YGII), 34–54 (MFLP…LTCL), 63–85 (IAYS…TPWG), 89–111 (GMTL…NTTY), 118–138 (ILIL…WWLL), and 156–176 (LLIM…LGLS).

This sequence belongs to the complex I subunit 4 family.

The protein localises to the mitochondrion membrane. It catalyses the reaction a ubiquinone + NADH + 5 H(+)(in) = a ubiquinol + NAD(+) + 4 H(+)(out). Its function is as follows. Core subunit of the mitochondrial membrane respiratory chain NADH dehydrogenase (Complex I) that is believed to belong to the minimal assembly required for catalysis. Complex I functions in the transfer of electrons from NADH to the respiratory chain. The immediate electron acceptor for the enzyme is believed to be ubiquinone. The sequence is that of NADH-ubiquinone oxidoreductase chain 4 (MT-ND4) from Calloselasma rhodostoma (Malayan pit viper).